A 598-amino-acid polypeptide reads, in one-letter code: Chromodomain Y-like protein (598 aa).

Residues 1–76 (MTFQASHRSA…VDKRKNKKGK (76 aa)) form a disordered region. Residues 44 to 56 (PSISVSSEQSGAQ) are compositionally biased toward polar residues. The 61-residue stretch at 61–121 (LQVERIVDKR…RHTEKQKEST (61 aa)) folds into the Chromo domain. The interval 61 to 309 (LQVERIVDKR…NIQTSVTGVT (249 aa)) is interaction with EZH2. Over residues 65–76 (RIVDKRKNKKGK) the composition is skewed to basic and acidic residues. Residue serine 88 is modified to Phosphoserine. Positions 112–121 (RHTEKQKEST) are enriched in basic and acidic residues. A disordered region spans residues 112–149 (RHTEKQKESTLTRTNRTSPNNARKQISRSTNSNFSKTS). The span at 122 to 149 (LTRTNRTSPNNARKQISRSTNSNFSKTS) shows a compositional bias: polar residues. The residue at position 135 (lysine 135) is an N6,N6,N6-trimethyllysine; by EHMT2; alternate. Lysine 135 bears the N6,N6-dimethyllysine; by EHMT2; alternate mark. N6-methyllysine; by EHMT2; alternate is present on lysine 135. 3 positions are modified to phosphoserine: serine 170, serine 201, and serine 216. The disordered stretch occupies residues 204-226 (KSRTAVDGFQSESPEKLDPVEQG). An acetyl-CoA-binding domain region spans residues 362–594 (SENNSLNPEV…DSMLKYLQRK (233 aa)).

Forms multimers and multimerization is required for stable binding to chromatin. Interacts with HDAC1 and HDAC2 via its C-terminal acetyl-CoA-binding domain. Interacts with EZH2, EED, SUZ12, REST, EHMT1 and EHMT2. Part of a complex containing at least CDYL, REST, WIZ, SETB1, EHMT1 and EHMT2. Part of a complex containing at least CDYL, MIER1, MIER2, HDAC1 and HDAC2. Interacts with CHAF1A and CHAF1B; bridging the CAF-1 complex to the MCM2-7 (MCM) complex. Interacts with MCM3 and MCM5; bridging the CAF-1 complex to the MCM2-7 (MCM) complex. Recruited to Xist RNA-coated X chromosome. Interacts with EHMT2 and PRDM9; interaction only takes place when PRDM9 is bound to hotspot DNA. In terms of tissue distribution, expressed in the hippocampus with reduced expression in epileptic tissue compared to normal adjacent tissue (at protein level). Ubiquitous. Expressed at moderate levels in all tissues examined. Isoform 2: Most abundantly expressed isoform.

It localises to the nucleus. The protein resides in the chromosome. It catalyses the reaction 3-hydroxybutanoyl-CoA = (2E)-butenoyl-CoA + H2O. Chromatin reader protein that recognizes and binds histone H3 trimethylated at 'Lys-9', dimethylated at 'Lys-27' and trimethylated at 'Lys-27' (H3K9me3, H3K27me2 and H3K27me3, respectively). Part of multimeric repressive chromatin complexes, where it is required for transmission and restoration of repressive histone marks, thereby preserving the epigenetic landscape. Required for chromatin targeting and maximal enzymatic activity of Polycomb repressive complex 2 (PRC2); acts as a positive regulator of PRC2 activity by bridging the pre-existing histone H3K27me3 and newly recruited PRC2 on neighboring nucleosomes. Acts as a corepressor for REST by facilitating histone-lysine N-methyltransferase EHMT2 recruitment and H3K9 dimethylation at REST target genes for repression. Involved in X chromosome inactivation in females: recruited to Xist RNA-coated X chromosome and facilitates propagation of H3K9me2 by anchoring EHMT2. Promotes EZH2 accumulation and H3K27me3 methylation at DNA double strand breaks (DSBs), thereby facilitating transcriptional repression at sites of DNA damage and homology-directed repair of DSBs. Required for neuronal migration during brain development by repressing expression of RHOA. By repressing the expression of SCN8A, contributes to the inhibition of intrinsic neuronal excitability and epileptogenesis. In addition to acting as a chromatin reader, acts as a hydro-lyase. Shows crotonyl-coA hydratase activity by mediating the conversion of crotonyl-CoA ((2E)-butenoyl-CoA) to beta-hydroxybutyryl-CoA (3-hydroxybutanoyl-CoA), thereby acting as a negative regulator of histone crotonylation. Histone crotonylation is required during spermatogenesis; down-regulation of histone crotonylation by CDYL regulates the reactivation of sex chromosome-linked genes in round spermatids and histone replacement in elongating spermatids. By regulating histone crotonylation and trimethylation of H3K27, may be involved in stress-induced depression-like behaviors, possibly by regulating VGF expression. Its function is as follows. Not able to recognize and bind histone H3K9me3, histone H3K27me2 and histone H3K27me3, due to the presence of a N-terminal extension that inactivates the chromo domain. In terms of biological role, not able to recognize and bind histone H3K9me3, histone H3K27me2 and histone H3K27me3, due to the absence of the chromo domain. Acts as a negative regulator of isoform 2 by displacing isoform 2 from chromatin. This is Chromodomain Y-like protein from Homo sapiens (Human).